We begin with the raw amino-acid sequence, 509 residues long: Dye-decolorizing peroxidase AauDyP1 (509 aa).

The first 22 residues, 1 to 22, serve as a signal peptide directing secretion; the sequence is MRLSPVFVALLSGLLAADLGLA. The propeptide occupies 23-61; it reads RSVAPRVADSPAAVTGTRKTSLLKNVAGLPPVPSAAQVA. The Proton acceptor role is filled by aspartate 229. A glycan (N-linked (GlcNAc...) asparagine) is linked at asparagine 343. Residue histidine 365 participates in heme binding. N-linked (GlcNAc...) asparagine glycans are attached at residues asparagine 383, asparagine 410, and asparagine 476.

The protein belongs to the DyP-type peroxidase family. The cofactor is heme b.

It localises to the secreted. The enzyme catalyses Reactive Blue 5 + 2 H2O2 = 2,2'-disulfonyl azobenzene + 3-[(4-amino-6-chloro-1,3,5-triazin-2-yl)amino]benzenesulfonate + phthalate + 2 H2O + 2 H(+). It carries out the reaction 2 a phenolic donor + H2O2 = 2 a phenolic radical donor + 2 H2O. With respect to regulation, inhibited by imidazole. Its function is as follows. Manganese-independent peroxidase that is able to convert a large number of compounds, but its physiological substrate is not known. In addition to classic peroxidase substrates (e.g. 2,6-dimethoxyphenol), oxidizes dyes such as Reactive Blue 5 and Reactive Black 5. The chain is Dye-decolorizing peroxidase AauDyP1 from Auricularia auricula-judae (Judas ear fungus).